Consider the following 78-residue polypeptide: DNA-directed RNA polymerase subunit omega (78 aa).

Belongs to the RNA polymerase subunit omega family. In cyanobacteria the RNAP catalytic core is composed of 2 alpha, 1 beta, 1 beta', 1 gamma and 1 omega subunit. When a sigma factor is associated with the core the holoenzyme is formed, which can initiate transcription.

It carries out the reaction RNA(n) + a ribonucleoside 5'-triphosphate = RNA(n+1) + diphosphate. In terms of biological role, promotes RNA polymerase assembly. Latches the N- and C-terminal regions of the beta' subunit thereby facilitating its interaction with the beta and alpha subunits. In Prochlorococcus marinus (strain MIT 9515), this protein is DNA-directed RNA polymerase subunit omega.